The chain runs to 121 residues: Large ribosomal subunit protein bL12 (121 aa).

This sequence belongs to the bacterial ribosomal protein bL12 family. As to quaternary structure, homodimer. Part of the ribosomal stalk of the 50S ribosomal subunit. Forms a multimeric L10(L12)X complex, where L10 forms an elongated spine to which 2 to 4 L12 dimers bind in a sequential fashion. Binds GTP-bound translation factors.

Forms part of the ribosomal stalk which helps the ribosome interact with GTP-bound translation factors. Is thus essential for accurate translation. This is Large ribosomal subunit protein bL12 from Ureaplasma urealyticum serovar 10 (strain ATCC 33699 / Western).